Here is an 815-residue protein sequence, read N- to C-terminus: DNA gyrase subunit B (815 aa).

The disordered stretch occupies residues 1-21 (MEKTPATGSAVAPPPVEYGTD). Positions 430–545 (SELYIVEGDS…AISTSRSRRS (116 aa)) constitute a Toprim domain. The Mg(2+) site is built by Glu436, Asp509, and Asp511.

The protein belongs to the type II topoisomerase GyrB family. As to quaternary structure, heterotetramer, composed of two GyrA and two GyrB chains. In the heterotetramer, GyrA contains the active site tyrosine that forms a transient covalent intermediate with DNA, while GyrB binds cofactors and catalyzes ATP hydrolysis. Mg(2+) is required as a cofactor. Requires Mn(2+) as cofactor. It depends on Ca(2+) as a cofactor.

It is found in the cytoplasm. The enzyme catalyses ATP-dependent breakage, passage and rejoining of double-stranded DNA.. A type II topoisomerase that negatively supercoils closed circular double-stranded (ds) DNA in an ATP-dependent manner to modulate DNA topology and maintain chromosomes in an underwound state. Negative supercoiling favors strand separation, and DNA replication, transcription, recombination and repair, all of which involve strand separation. Also able to catalyze the interconversion of other topological isomers of dsDNA rings, including catenanes and knotted rings. Type II topoisomerases break and join 2 DNA strands simultaneously in an ATP-dependent manner. In Myxococcus xanthus, this protein is DNA gyrase subunit B.